Reading from the N-terminus, the 692-residue chain is ABC1 family protein C21C3.03, mitochondrial (692 aa).

The transit peptide at 1 to 91 directs the protein to the mitochondrion; that stretch reads MISFSHWNSH…RKFTTRQKSE (91 aa). The next 2 helical transmembrane spans lie at 96–116 and 161–181; these read WRIL…LWIL and LFII…ISFL.

Belongs to the protein kinase superfamily. ADCK protein kinase family.

The protein localises to the mitochondrion membrane. This is ABC1 family protein C21C3.03, mitochondrial from Schizosaccharomyces pombe (strain 972 / ATCC 24843) (Fission yeast).